Reading from the N-terminus, the 423-residue chain is Mannose-6-phosphate isomerase (423 aa).

At Ala2 the chain carries N-acetylalanine. Residues Ser102 and Ser108 each carry the phosphoserine modification. Zn(2+) contacts are provided by Gln110, His112, Glu137, and His276. Arg295 is an active-site residue.

This sequence belongs to the mannose-6-phosphate isomerase type 1 family. Requires Zn(2+) as cofactor.

The protein resides in the cytoplasm. The catalysed reaction is D-mannose 6-phosphate = D-fructose 6-phosphate. It participates in nucleotide-sugar biosynthesis; GDP-alpha-D-mannose biosynthesis; alpha-D-mannose 1-phosphate from D-fructose 6-phosphate: step 1/2. Isomerase that catalyzes the interconversion of fructose-6-P and mannose-6-P and has a critical role in the supply of D-mannose derivatives required for many eukaryotic glycosylation reactions. The polypeptide is Mannose-6-phosphate isomerase (MPI) (Pan troglodytes (Chimpanzee)).